The primary structure comprises 186 residues: MGLKSDSWIRKMSVEKKMIVPFAEEQVGRGVVSYGVSSYGYDIRVGDEFKIFTNIGGTVVDPKNFDEKNVVDFKGDVCIVPPNSFALARTIEYFNMPDNVLAICLGKSTYARCGIIVNVTPFEPGFKGHITIEISNTTPLPAKIYANEGIAQVLFIEGDEPCEVTYADKNGKYQAQEGITLPRILK.

Position 107–112 (107–112) interacts with dCTP; sequence KSTYAR. Glu-133 (proton donor/acceptor) is an active-site residue. DCTP contacts are provided by Gln-152, Tyr-166, and Gln-176.

It belongs to the dCTP deaminase family. As to quaternary structure, homotrimer.

It carries out the reaction dCTP + H2O + H(+) = dUTP + NH4(+). The protein operates within pyrimidine metabolism; dUMP biosynthesis; dUMP from dCTP (dUTP route): step 1/2. In terms of biological role, catalyzes the deamination of dCTP to dUTP. The polypeptide is dCTP deaminase (Campylobacter concisus (strain 13826)).